The sequence spans 251 residues: Hydroxyacylglutathione hydrolase (251 aa).

Zn(2+) is bound by residues H53, H55, D57, H58, H110, D127, and H165.

This sequence belongs to the metallo-beta-lactamase superfamily. Glyoxalase II family. Monomer. Requires Zn(2+) as cofactor.

The enzyme catalyses an S-(2-hydroxyacyl)glutathione + H2O = a 2-hydroxy carboxylate + glutathione + H(+). Its pathway is secondary metabolite metabolism; methylglyoxal degradation; (R)-lactate from methylglyoxal: step 2/2. Functionally, thiolesterase that catalyzes the hydrolysis of S-D-lactoyl-glutathione to form glutathione and D-lactic acid. This Salmonella typhi protein is Hydroxyacylglutathione hydrolase.